Reading from the N-terminus, the 518-residue chain is MESTDSSPPLSMTDTEKKGDAVTTVTDESSVSEYERFLHLENVFSGASRKKLLRKLDLRLLPTLSFLYLMCSLDKSNAGNAKLFGLLEDLGMSGTQYNLALMYFFFTYGLSEPVSNIMLRRVGPKIWFPFIVCAWGLITTLTSQASSYAGFVVIRLMLGITEAGLYPGAYFILSMWYTPKEIGTRMAIFYGANTTAGAFGGVIAYGVGSLDGNLGWRAWRWLFLIEGCITIFAGLACLFCLPAFPHQYQAGKGTKWLTDEELEYASLRVKYANGPVSSTYTFRWSDVVAAAKDRKTYFMMMLFWWGGSVPTYSLSYTLPTMVANLGYTAVKAQVMTTPPYIFATCVCVAVGYISDQTQRRYLCIMGAYTLGLIGIIILWITVHHPSIPGVSYFAIFLAAAGYSAQAPIVGAWTASNITNPSKRAAAIGLLMLLGSVGGGSIGSNIYISSEAPTYPLGFGFSVGATVLGAMIPATIHWFLMRKENKRRGGLDVAEIERKYTTEELGEMGEDSPLFRFVL.

Residues 1–13 (MESTDSSPPLSMT) show a composition bias toward polar residues. Residues 1–24 (MESTDSSPPLSMTDTEKKGDAVTT) form a disordered region. The next 9 membrane-spanning stretches (helical) occupy residues 99–119 (LALM…NIML), 122–142 (VGPK…TTLT), 156–176 (LMLG…LSMW), 187–207 (AIFY…AYGV), 221–241 (WLFL…LFCL), 298–318 (FMMM…SYTL), 334–354 (VMTT…GYIS), 362–382 (LCIM…WITV), and 392–412 (YFAI…VGAW). N-linked (GlcNAc...) asparagine glycosylation occurs at asparagine 416. 2 consecutive transmembrane segments (helical) span residues 427-447 (IGLL…NIYI) and 455-475 (PLGF…PATI).

This sequence belongs to the major facilitator superfamily.

It localises to the cell membrane. MFS-type transporter; part of the gene cluster that mediates the biosynthesis of communesins, a prominent class of indole alkaloids with great potential as pharmaceuticals. With the MFS transporter cnsL, is most likely responsible for cummunesins secretion and thereby may contribute to intrinsic resistance. In Penicillium expansum (Blue mold rot fungus), this protein is MFS-type transporter cnsO.